The chain runs to 116 residues: Large ribosomal subunit protein uL24 (116 aa).

This sequence belongs to the universal ribosomal protein uL24 family. As to quaternary structure, part of the 50S ribosomal subunit.

In terms of biological role, one of two assembly initiator proteins, it binds directly to the 5'-end of the 23S rRNA, where it nucleates assembly of the 50S subunit. Functionally, located at the polypeptide exit tunnel on the outside of the subunit. This Methanothrix thermoacetophila (strain DSM 6194 / JCM 14653 / NBRC 101360 / PT) (Methanosaeta thermophila) protein is Large ribosomal subunit protein uL24.